We begin with the raw amino-acid sequence, 366 residues long: Quinolinate synthase (366 aa).

Positions 44 and 61 each coordinate iminosuccinate. [4Fe-4S] cluster is bound at residue Cys-108. Residues 139 to 141 and Ser-160 contribute to the iminosuccinate site; that span reads YVN. Cys-228 contributes to the [4Fe-4S] cluster binding site. Residues 254 to 256 and Thr-271 contribute to the iminosuccinate site; that span reads HPE. Cys-318 provides a ligand contact to [4Fe-4S] cluster.

This sequence belongs to the quinolinate synthase family. Type 3 subfamily. It depends on [4Fe-4S] cluster as a cofactor.

The protein resides in the cytoplasm. The catalysed reaction is iminosuccinate + dihydroxyacetone phosphate = quinolinate + phosphate + 2 H2O + H(+). It functions in the pathway cofactor biosynthesis; NAD(+) biosynthesis; quinolinate from iminoaspartate: step 1/1. Catalyzes the condensation of iminoaspartate with dihydroxyacetone phosphate to form quinolinate. This chain is Quinolinate synthase, found in Staphylococcus carnosus (strain TM300).